A 338-amino-acid chain; its full sequence is Deoxyhypusine hydroxylase (338 aa).

HEAT-like PBS-type repeat units lie at residues 71 to 97 (LKHE…VLKD), 104 to 130 (CRHE…LKDD), 200 to 233 (QRYR…GLKD), 238 to 264 (FRHE…CLSN), and 271 to 298 (VRHE…FLND). Residues H73, E74, H106, and E107 each contribute to the Fe cation site. H240, E241, H273, and E274 together coordinate Fe cation.

It belongs to the deoxyhypusine hydroxylase family. It depends on Fe(2+) as a cofactor.

It localises to the cytoplasm. The protein resides in the nucleus. It catalyses the reaction [eIF5A protein]-deoxyhypusine + AH2 + O2 = [eIF5A protein]-hypusine + A + H2O. It functions in the pathway protein modification; eIF5A hypusination. In terms of biological role, catalyzes the hydroxylation of the N(6)-(4-aminobutyl)-L-lysine intermediate to form hypusine, an essential post-translational modification only found in mature eIF-5A factor. In Aspergillus niger (strain ATCC MYA-4892 / CBS 513.88 / FGSC A1513), this protein is Deoxyhypusine hydroxylase (lia1).